We begin with the raw amino-acid sequence, 90 residues long: Small cysteine-rich outer membrane protein OmcA (90 aa).

The first 19 residues, 1 to 19 (MKKAVLIAAMFCGVVSLSS), serve as a signal peptide directing secretion. Cys-20 carries the N-palmitoyl cysteine lipid modification. The S-diacylglycerol cysteine moiety is linked to residue Cys-20. The segment at 69–90 (TECNSQSPQVKGCTSPDGRCKQ) is disordered.

As to quaternary structure, part of a disulfide cross-linked outer membrane complex (COMC) composed of the major outer membrane porin (MOMP), the small cysteine-rich protein (OmcA) and the large cysteine-rich periplasmic protein (OmcB).

It is found in the cell outer membrane. In terms of biological role, in elementary bodies (EBs, the infectious stage, which is able to survive outside the host cell) provides the structural integrity of the outer envelope through disulfide cross-links with the large cysteine-rich periplasmic protein and the major outer membrane porin. It has been described in publications as the Sarkosyl-insoluble COMC (Chlamydia outer membrane complex), and serves as the functional equivalent of peptidoglycan. This Chlamydia pneumoniae (Chlamydophila pneumoniae) protein is Small cysteine-rich outer membrane protein OmcA (omcA).